Reading from the N-terminus, the 158-residue chain is Mitotic-spindle organizing protein 2A (158 aa).

S34 is modified (phosphoserine). The disordered stretch occupies residues 84 to 158 (RLASEPQDPA…PGKSPTQGST (75 aa)). Residues 112 to 122 (SAALGGVLALA) show a composition bias toward low complexity. Residues 128-140 (EGSSQRMPRQPSA) show a composition bias toward polar residues. Phosphoserine is present on S152.

This sequence belongs to the MOZART2 family. In terms of assembly, associates with the gamma-tubulin ring complex (gTuRC) consisting of TUBGCP2, TUBGCP3, TUBGCP4, TUBGCP5 and TUBGCP6 and gamma-tubulin TUBG1 or TUBG2; within the complex, interacts with TUBGCP2; the interaction plays a role in gTuRC activation.

Its subcellular location is the cytoplasm. It localises to the cytoskeleton. The protein localises to the microtubule organizing center. It is found in the centrosome. The protein resides in the spindle. In terms of biological role, required for the recruitment and the assembly of the gamma-tubulin ring complex (gTuRC) at the centrosome. The gTuRC regulates the minus-end nucleation of alpha-beta tubulin heterodimers that grow into microtubule protafilaments, a critical step in centrosome duplication and spindle formation. In Homo sapiens (Human), this protein is Mitotic-spindle organizing protein 2A (MZT2A).